We begin with the raw amino-acid sequence, 336 residues long: UPF0324 membrane protein spr0034 (336 aa).

The next 8 membrane-spanning stretches (helical) occupy residues 65 to 84 (LLQY…QVFA), 91 to 113 (PVIL…FFAL), 118 to 140 (ATLV…APVI), 153 to 175 (VIFF…LHLS), 211 to 233 (SATI…LSYW), 249 to 271 (VFPL…TSLG), 286 to 305 (FLIV…VAMV), and 312 to 334 (ILLG…TLIG).

This sequence belongs to the UPF0324 family.

The protein localises to the cell membrane. This chain is UPF0324 membrane protein spr0034, found in Streptococcus pneumoniae (strain ATCC BAA-255 / R6).